We begin with the raw amino-acid sequence, 232 residues long: Jasmonate ZIM domain-containing protein 1 (232 aa).

Positions 1–24 are disordered; it reads MSSFPNTVAEGRRSGKAPEKSTFS. Over residues 10 to 19 the composition is skewed to basic and acidic residues; sequence EGRRSGKAPE. A Tify domain is found at 96 to 131; the sequence is PGPESPQLTIFYAGKMLVFDAFPPEKATEVMEMATK. 2 stretches are compositionally biased toward polar residues: residues 133 to 142 and 158 to 167; these read ASNNSGTEES and MPQTNTSSET. A disordered region spans residues 133–232; it reads ASNNSGTEES…QCSKQFDLNF (100 aa). The Nuclear localization signal signature appears at 182–189; it reads PRRASLLK. The Jas signature appears at 183-205; that stretch reads RRASLLKFLEKRKERVNARGPYQ. A compositionally biased stretch (basic and acidic residues) spans 190–199; that stretch reads FLEKRKERVN.

Belongs to the TIFY/JAZ family. As to quaternary structure, (Microbial infection) Interacts with the pathogenic Pseudomonas syringae HopZ1a protein; this interaction leads to its degradation. In terms of processing, ubiquitinated. Targeted for degradation by the SCF(COI1) E3 ubiquitin ligase-proteasome pathway during jasmonate signaling. (Microbial infection) Acetylated by Pseudomonas syringae HopZ1a. Mostly expressed in leaves and flowers and, to a lower extent, in grean pods and roots.

Its subcellular location is the nucleus. It is found in the cell membrane. Functionally, repressor of jasmonate responses. This chain is Jasmonate ZIM domain-containing protein 1, found in Glycine max (Soybean).